The primary structure comprises 451 residues: tRNA modification GTPase MnmE (451 aa).

Residues Arg-28, Glu-85, and Lys-124 each coordinate (6S)-5-formyl-5,6,7,8-tetrahydrofolate. One can recognise a TrmE-type G domain in the interval 220 to 373; the sequence is GLYTVLVGPP…LKTRLRTLLL (154 aa). Asn-230 is a binding site for K(+). GTP is bound by residues 230-235, 249-255, and 274-277; these read NVGKSS, TDVPGTT, and DTAG. Residue Ser-234 coordinates Mg(2+). Thr-249, Val-251, and Thr-254 together coordinate K(+). Thr-255 is a binding site for Mg(2+). Lys-451 is a binding site for (6S)-5-formyl-5,6,7,8-tetrahydrofolate.

Belongs to the TRAFAC class TrmE-Era-EngA-EngB-Septin-like GTPase superfamily. TrmE GTPase family. Homodimer. Heterotetramer of two MnmE and two MnmG subunits. It depends on K(+) as a cofactor.

It localises to the cytoplasm. In terms of biological role, exhibits a very high intrinsic GTPase hydrolysis rate. Involved in the addition of a carboxymethylaminomethyl (cmnm) group at the wobble position (U34) of certain tRNAs, forming tRNA-cmnm(5)s(2)U34. This is tRNA modification GTPase MnmE from Xylella fastidiosa (strain 9a5c).